Reading from the N-terminus, the 372-residue chain is NADH-quinone oxidoreductase subunit D (372 aa).

It belongs to the complex I 49 kDa subunit family. NDH-1 is composed of 14 different subunits. Subunits NuoB, C, D, E, F, and G constitute the peripheral sector of the complex.

It localises to the cell inner membrane. The catalysed reaction is a quinone + NADH + 5 H(+)(in) = a quinol + NAD(+) + 4 H(+)(out). Its function is as follows. NDH-1 shuttles electrons from NADH, via FMN and iron-sulfur (Fe-S) centers, to quinones in the respiratory chain. The immediate electron acceptor for the enzyme in this species is believed to be ubiquinone. Couples the redox reaction to proton translocation (for every two electrons transferred, four hydrogen ions are translocated across the cytoplasmic membrane), and thus conserves the redox energy in a proton gradient. The protein is NADH-quinone oxidoreductase subunit D of Desulfotalea psychrophila (strain LSv54 / DSM 12343).